A 136-amino-acid chain; its full sequence is Group 1 truncated hemoglobin GlbN (136 aa).

Heme is bound at residue His-81.

The protein belongs to the truncated hemoglobin family. Group I subfamily. In terms of assembly, homodimer. Heme is required as a cofactor.

Its function is as follows. Binds oxygen cooperatively with very high affinity (P(50) = 0.013 mmHg at 20 degrees Celsius) because of a fast combination (25 microM(-1)sec(-1)) and a slow dissociation (0.2 sec(-1)) rate. In Mycobacterium bovis (strain ATCC BAA-935 / AF2122/97), this protein is Group 1 truncated hemoglobin GlbN (glbN).